Here is a 444-residue protein sequence, read N- to C-terminus: Divalent metal cation transporter MntH (444 aa).

Transmembrane regions (helical) follow at residues 39 to 59, 69 to 89, 109 to 128, 146 to 166, 175 to 195, 215 to 235, 264 to 284, 304 to 324, 346 to 366, 372 to 392, and 417 to 437; these read LLFAGPAVIASIAYVDPGNFA, GYTLLWVVAAANLIAMLFQAL, FSRPLVIALWIISEIAAMAT, LPLIIGMVATAMITFALLLFE, LVIGALVATIGLCYLAEMFIA, TALTIATGIVGATVMPHAVYL, VILALALAGMVNMAMVIMAAS, TPLLGAAAAAIFLISLITSGI, IPVWLRRLVTMVPAFIVILAG, ALVISQVILSIALPAPMIALI, and AAAIVLGLNMVLLIQAFGFTI.

This sequence belongs to the NRAMP family.

It is found in the cell inner membrane. H(+)-stimulated, divalent metal cation uptake system. The protein is Divalent metal cation transporter MntH of Granulibacter bethesdensis (strain ATCC BAA-1260 / CGDNIH1).